The following is a 288-amino-acid chain: Coiled-coil domain-containing protein 190 (288 aa).

Positions 16–69 (LERKSARQAEARLSLRLQRLEIICLYHVKSLAREQRQLQKELQRLQQDIIKKRF) form a coiled coil. Residues 141-235 (GERTSCFKEG…SSVDYAGSFK (95 aa)) are disordered. Residues 177–188 (HDQELSTNKTED) are compositionally biased toward basic and acidic residues. Positions 203–213 (ANETRSENASQ) are enriched in polar residues.

The sequence is that of Coiled-coil domain-containing protein 190 (Ccdc190) from Mus musculus (Mouse).